We begin with the raw amino-acid sequence, 325 residues long: 6-phosphogluconolactonase 3, chloroplastic (325 aa).

The transit peptide at 1-68 (MASSSCFLRS…KSSDTRRKVK (68 aa)) directs the protein to the chloroplast. A disordered region spans residues 51–73 (SIGTGSTKKSSDTRRKVKSMATT). The short motif at 323–325 (SKL) is the Microbody targeting signal element.

Belongs to the glucosamine/galactosamine-6-phosphate isomerase family. 6-phosphogluconolactonase subfamily. In terms of assembly, interacts with TRXM2. As to expression, expressed in roots, leaves and shoots.

It localises to the plastid. Its subcellular location is the chloroplast. The protein localises to the peroxisome. It carries out the reaction 6-phospho-D-glucono-1,5-lactone + H2O = 6-phospho-D-gluconate + H(+). The protein operates within carbohydrate degradation; pentose phosphate pathway; D-ribulose 5-phosphate from D-glucose 6-phosphate (oxidative stage): step 2/3. In terms of biological role, catalyzes the hydrolysis of 6-phosphogluconolactone to 6-phosphogluconate. Involved in the regulation of cellular redox state; enzymatic activity is required for this function. Required for sugar-dependent expression of nitrate assimilation genes in the nucleus of root cells. The sequence is that of 6-phosphogluconolactonase 3, chloroplastic from Arabidopsis thaliana (Mouse-ear cress).